The following is a 63-amino-acid chain: Cecropin-B (63 aa).

The signal sequence occupies residues 1-23 (MNFNKIFVFVALILAISLGNSEA). Arg62 is subject to Arginine amide.

Belongs to the cecropin family. In terms of tissue distribution, strongly expressed in larval, pupal and adult fat body and hemocytes after injection of bacteria. Maximal expression is seen in pupae.

The protein localises to the secreted. Functionally, cecropins have lytic and antibacterial activity against several Gram-positive and Gram-negative bacteria. The polypeptide is Cecropin-B (CecB) (Drosophila melanogaster (Fruit fly)).